The primary structure comprises 239 residues: Protein Thf1 (239 aa).

The stretch at Glu-183–Gln-221 forms a coiled coil. A compositionally biased stretch (basic and acidic residues) spans Lys-211–Gln-221. The segment at Lys-211–Ser-239 is disordered.

This sequence belongs to the THF1 family.

May be involved in photosynthetic membrane biogenesis. This is Protein Thf1 from Synechococcus sp. (strain JA-2-3B'a(2-13)) (Cyanobacteria bacterium Yellowstone B-Prime).